We begin with the raw amino-acid sequence, 286 residues long: Energy-coupling factor transporter ATP-binding protein EcfA2 (286 aa).

In terms of domain architecture, ABC transporter spans 3–246; it reads IQFNQVSYIY…KTQLLKWHIE (244 aa). 40–47 contacts ATP; sequence GQTGSGKS.

It belongs to the ABC transporter superfamily. Energy-coupling factor EcfA family. Forms a stable energy-coupling factor (ECF) transporter complex composed of 2 membrane-embedded substrate-binding proteins (S component), 2 ATP-binding proteins (A component) and 2 transmembrane proteins (T component).

It is found in the cell membrane. ATP-binding (A) component of a common energy-coupling factor (ECF) ABC-transporter complex. Unlike classic ABC transporters this ECF transporter provides the energy necessary to transport a number of different substrates. This Staphylococcus epidermidis (strain ATCC 35984 / DSM 28319 / BCRC 17069 / CCUG 31568 / BM 3577 / RP62A) protein is Energy-coupling factor transporter ATP-binding protein EcfA2.